The following is a 209-amino-acid chain: Protein-L-isoaspartate O-methyltransferase (209 aa).

S59 is a catalytic residue.

This sequence belongs to the methyltransferase superfamily. L-isoaspartyl/D-aspartyl protein methyltransferase family.

It localises to the cytoplasm. It catalyses the reaction [protein]-L-isoaspartate + S-adenosyl-L-methionine = [protein]-L-isoaspartate alpha-methyl ester + S-adenosyl-L-homocysteine. Functionally, catalyzes the methyl esterification of L-isoaspartyl residues in peptides and proteins that result from spontaneous decomposition of normal L-aspartyl and L-asparaginyl residues. It plays a role in the repair and/or degradation of damaged proteins. The chain is Protein-L-isoaspartate O-methyltransferase from Helicobacter pylori (strain G27).